The following is a 200-amino-acid chain: Holliday junction resolvase RecU (200 aa).

The interval 1–25 (MTIRYPNGKRYNQASQPHKTPIKKH) is disordered. Residues T85, D87, E100, and Q119 each contribute to the Mg(2+) site.

The protein belongs to the RecU family. Mg(2+) is required as a cofactor.

Its subcellular location is the cytoplasm. It catalyses the reaction Endonucleolytic cleavage at a junction such as a reciprocal single-stranded crossover between two homologous DNA duplexes (Holliday junction).. Functionally, endonuclease that resolves Holliday junction intermediates in genetic recombination. Cleaves mobile four-strand junctions by introducing symmetrical nicks in paired strands. Promotes annealing of linear ssDNA with homologous dsDNA. Required for DNA repair, homologous recombination and chromosome segregation. In Bacillus cereus (strain ZK / E33L), this protein is Holliday junction resolvase RecU.